The sequence spans 447 residues: UPF0210 protein lhv_0606 (447 aa).

It belongs to the UPF0210 family. As to quaternary structure, homodimer.

The polypeptide is UPF0210 protein lhv_0606 (Lactobacillus helveticus (strain DPC 4571)).